Here is a 671-residue protein sequence, read N- to C-terminus: DNA ligase (671 aa).

NAD(+)-binding positions include 32 to 36 (DVEYD), 81 to 82 (SL), and glutamate 113. Catalysis depends on lysine 115, which acts as the N6-AMP-lysine intermediate. Positions 136, 173, 290, and 314 each coordinate NAD(+). Zn(2+) contacts are provided by cysteine 408, cysteine 411, cysteine 426, and cysteine 432. Residues 593–671 (EIDSPFAGKT…EAEMLRLLGS (79 aa)) form the BRCT domain.

Belongs to the NAD-dependent DNA ligase family. LigA subfamily. The cofactor is Mg(2+). Requires Mn(2+) as cofactor.

It catalyses the reaction NAD(+) + (deoxyribonucleotide)n-3'-hydroxyl + 5'-phospho-(deoxyribonucleotide)m = (deoxyribonucleotide)n+m + AMP + beta-nicotinamide D-nucleotide.. Functionally, DNA ligase that catalyzes the formation of phosphodiester linkages between 5'-phosphoryl and 3'-hydroxyl groups in double-stranded DNA using NAD as a coenzyme and as the energy source for the reaction. It is essential for DNA replication and repair of damaged DNA. The chain is DNA ligase from Escherichia coli O17:K52:H18 (strain UMN026 / ExPEC).